The chain runs to 382 residues: uncharacterized protein (382 aa).

12 helical membrane-spanning segments follow: residues 14-34 (GLLL…LWLA), 45-65 (VVSS…GYVI), 79-99 (FIFA…SWLA), 102-122 (FVAG…LMCS), 131-151 (LLAA…LLVS), 157-177 (LMSV…PLLF), 204-224 (LGVN…GLMP), 235-255 (ASIG…QWPI), 270-290 (VQVF…AMAP), 291-311 (ALFI…AWAC), 325-345 (ALLL…AMLM), and 348-368 (FSDN…LLML).

The protein belongs to the major facilitator superfamily. YcaD (TC 2.A.1.26) family.

The protein resides in the cell inner membrane. This is an uncharacterized protein from Shigella flexneri serotype 5b (strain 8401).